A 348-amino-acid polypeptide reads, in one-letter code: MARTLQGEWMKVEQKGGQVPAPRSSHGIAVIGDKLYCFGGEDPPYESIDNDLYVFDFNTHTWSIAPANGDVPKTRVLGTRMVAVGTKLYVFGGRNKQLEFEDFYSYDTVKEEWKFLTKLDEKGGPEARTFHSMTSDENHVYVFGGVSKGGLNATPFRFRTIEAYNIAEGKWAQLPDPGEDFEKRGMAGFLVVQGKLWVFYGFATANDPKIPTLYGSQDYESNRVHCYDPATQKWTEVETTGFEKPSRRSCFAHAAVGKYIIIFGGEIERDPEAHQGPGTLSREGFALDTETLVWERYEGGPIKPSNRGWVASTTTTINGKKGLLVHGGKLMTNERTDEMYFFAVNSST.

Kelch repeat units lie at residues 1–33 (MART…VIGD), 34–85 (KLYC…VAVG), 87–133 (KLYV…FHSM), 139–194 (HVYV…VVQG), 209–254 (KIPT…FAHA), 259–314 (YIII…ASTT), and 322–348 (GLLV…NSST). The a (Z)-N-(sulfonatooxy)alkanimidothioate site is built by E46, R94, T129, F130, and R157. R94 (proton donor) is an active-site residue. R157 functions as the Proton donor in the catalytic mechanism. E220 functions as the Proton acceptor in the catalytic mechanism. Position 266 (E266) interacts with Fe(2+). A (Z)-N-(sulfonatooxy)alkanimidothioate is bound at residue R269. The Fe(2+) site is built by D270 and H274. Positions 309 and 310 each coordinate a (Z)-N-(sulfonatooxy)alkanimidothioate.

In terms of assembly, homodimer. Requires Fe(2+) as cofactor. Expressed constitutively in roots, stems, leaves, flowers, siliques and seedlings.

The catalysed reaction is (Z)-N-(sulfonatooxy)prop-2-enimidothioate = allyl thiocyanate + sulfate. It catalyses the reaction (Z)-N-(sulfonatooxy)prop-2-enimidothioate = 2-(thiiran-2-yl)acetonitrile + sulfate. The enzyme catalyses (Z)-N-(sulfonatooxy)prop-2-enimidothioate = allyl isothiocyanate + sulfate. It carries out the reaction (Z)-phenyl-N-(sulfonatooxy)methanimidothioate = phenylacetonitrile + sulfur + sulfate. The catalysed reaction is glucoerucin + H2O = (Z)-4-methylsulfanylbutyl-N-(sulfonatooxy)methanimidothioate + D-glucose. It catalyses the reaction (Z)-4-methylsulfanylbutyl-N-(sulfonatooxy)methanimidothioate = 5-(methylsulfanyl)pentanenitrile + sulfur + sulfate + H(+). With respect to regulation, stimulated by the presence of Fe(2+) leading to an increase formation of both thiocyanate and epithionitrile with allylglucosinolate as substrate in the presence of myrosinase. Repressed by EDTA. Functionally, specifier protein that contributes to constitutive and herbivore-induced simple nitrile formation. Catalyzes allylthiocyanate and corresponding epithionitrile formation from allylglucosinolate in the presence of myrosinase. Also converts aliphatic glucosinolates, such as indol-3-ylmethylglucosinolate, 4-methylsulfinylbutylglucosinolate, 4-methylthiobutyl- and benzylisothiocyanate, to simple nitriles. The chain is N-(sulfonatooxy)prop-2-enimidothioate sulfolyase from Thlaspi arvense (Field penny-cress).